Consider the following 134-residue polypeptide: Ribonuclease P protein component (134 aa).

It belongs to the RnpA family. Consists of a catalytic RNA component (M1 or rnpB) and a protein subunit.

It catalyses the reaction Endonucleolytic cleavage of RNA, removing 5'-extranucleotides from tRNA precursor.. Functionally, RNaseP catalyzes the removal of the 5'-leader sequence from pre-tRNA to produce the mature 5'-terminus. It can also cleave other RNA substrates such as 4.5S RNA. The protein component plays an auxiliary but essential role in vivo by binding to the 5'-leader sequence and broadening the substrate specificity of the ribozyme. In Pseudomonas putida (strain ATCC 700007 / DSM 6899 / JCM 31910 / BCRC 17059 / LMG 24140 / F1), this protein is Ribonuclease P protein component.